The chain runs to 299 residues: MEKNPITLLILNGKSAGNDELREAIGELRKDGYTLHVRVTWEYGDAKRYVEEAIQLKADNVIAAGGDGTVNEVAAALAVQPEAVRPCLGIVPLGTANDFATSCQIPMEMHNALTLAIKGRATAIDIAKVNDGHYFINMATGGFATRITTETPAKMKAALGSASYVLHALFRMDMLQAERCEIHGPDFHWSGDTLVIAVGNGRQAGGGQQLCPEALINDGLLELSVLSATELLPNMLQAWFTGSENQNMISATLPWLEISAPDDMTFNLDGEPLTAKRFRIEVLPAAIHCRLPPQCSLLE.

The 132-residue stretch at 2–133 (EKNPITLLIL…IDIAKVNDGH (132 aa)) folds into the DAGKc domain. Residues T40, 66–72 (GDGTVNE), and T95 contribute to the ATP site. Residues L215, D218, and L220 each contribute to the Mg(2+) site. The Proton acceptor role is filled by E271.

It belongs to the diacylglycerol/lipid kinase family. YegS lipid kinase subfamily. The cofactor is Mg(2+). Requires Ca(2+) as cofactor.

The protein resides in the cytoplasm. In terms of biological role, probably phosphorylates lipids; the in vivo substrate is unknown. This is Probable lipid kinase YegS-like from Pectobacterium atrosepticum (strain SCRI 1043 / ATCC BAA-672) (Erwinia carotovora subsp. atroseptica).